A 438-amino-acid polypeptide reads, in one-letter code: Serine hydroxymethyltransferase (438 aa).

Residues Leu133 and 137 to 139 (GHL) each bind (6S)-5,6,7,8-tetrahydrofolate. Lys242 is modified (N6-(pyridoxal phosphate)lysine).

It belongs to the SHMT family. Homodimer. Pyridoxal 5'-phosphate is required as a cofactor.

It is found in the cytoplasm. It catalyses the reaction (6R)-5,10-methylene-5,6,7,8-tetrahydrofolate + glycine + H2O = (6S)-5,6,7,8-tetrahydrofolate + L-serine. It participates in one-carbon metabolism; tetrahydrofolate interconversion. It functions in the pathway amino-acid biosynthesis; glycine biosynthesis; glycine from L-serine: step 1/1. Its function is as follows. Catalyzes the reversible interconversion of serine and glycine with tetrahydrofolate (THF) serving as the one-carbon carrier. This reaction serves as the major source of one-carbon groups required for the biosynthesis of purines, thymidylate, methionine, and other important biomolecules. Also exhibits THF-independent aldolase activity toward beta-hydroxyamino acids, producing glycine and aldehydes, via a retro-aldol mechanism. This is Serine hydroxymethyltransferase from Brucella ovis (strain ATCC 25840 / 63/290 / NCTC 10512).